Here is a 65-residue protein sequence, read N- to C-terminus: Large ribosomal subunit protein bL35 (65 aa).

Basic residues-rich tracts occupy residues 1–11 (MPKIKTRRSAA) and 21–43 (KFKR…RKMR). Positions 1–65 (MPKIKTRRSA…KAVRRMLPNG (65 aa)) are disordered.

This sequence belongs to the bacterial ribosomal protein bL35 family.

This is Large ribosomal subunit protein bL35 from Desulfovibrio desulfuricans (strain ATCC 27774 / DSM 6949 / MB).